Consider the following 361-residue polypeptide: Protein RecA (361 aa).

77–84 (GPESSGKT) serves as a coordination point for ATP.

The protein belongs to the RecA family.

Its subcellular location is the cytoplasm. Functionally, can catalyze the hydrolysis of ATP in the presence of single-stranded DNA, the ATP-dependent uptake of single-stranded DNA by duplex DNA, and the ATP-dependent hybridization of homologous single-stranded DNAs. It interacts with LexA causing its activation and leading to its autocatalytic cleavage. In Brucella abortus (strain S19), this protein is Protein RecA.